Here is a 394-residue protein sequence, read N- to C-terminus: Protein TsgA homolog (394 aa).

Helical transmembrane passes span 11–31 (WISY…GIVM), 51–71 (FLNA…EIIP), 76–96 (LVFG…GHNL), 101–121 (ISMF…TFLV), 134–154 (LLFT…AAAM), 162–182 (WYWV…LTLC), 206–226 (VGVL…LGFI), 246–266 (QLVS…SFIL), 274–294 (IVTV…STDN), 302–322 (ILAL…LGSL), 334–354 (FILT…GPIV), and 363–383 (LETA…LGFF).

Belongs to the major facilitator superfamily. TsgA family.

Its subcellular location is the cell inner membrane. The polypeptide is Protein TsgA homolog (Yersinia pestis bv. Antiqua (strain Antiqua)).